The sequence spans 120 residues: Photosystem II extrinsic protein U (120 aa).

Positions 1–29 are cleaved as a signal peptide; that stretch reads MKRLLSLLTGVLVMTGLLMALIFPQSAYA.

Belongs to the PsbU family. PSII is composed of 1 copy each of membrane proteins PsbA, PsbB, PsbC, PsbD, PsbE, PsbF, PsbH, PsbI, PsbJ, PsbK, PsbL, PsbM, PsbT, PsbX, PsbY, Psb30/Ycf12, peripheral proteins PsbO, CyanoQ (PsbQ), PsbU, PsbV and a large number of cofactors. It forms dimeric complexes.

It is found in the cellular thylakoid membrane. One of the extrinsic, lumenal subunits of photosystem II (PSII). PSII is a light-driven water plastoquinone oxidoreductase, using light energy to abstract electrons from H(2)O, generating a proton gradient subsequently used for ATP formation. The extrinsic proteins stabilize the structure of photosystem II oxygen-evolving complex (OEC), the ion environment of oxygen evolution and protect the OEC against heat-induced inactivation. The chain is Photosystem II extrinsic protein U from Prochlorococcus marinus (strain MIT 9313).